The sequence spans 523 residues: DNA-(apurinic or apyrimidinic site) endonuclease 2 (523 aa).

Residue glutamate 42 participates in Mg(2+) binding. Tyrosine 151 is a catalytic residue. Aspartate 191, asparagine 193, and aspartate 294 together coordinate Mg(2+). Aspartate 191 functions as the Proton donor/acceptor in the catalytic mechanism. Residues methionine 348–arginine 392 form a disordered region. Residues asparagine 353 to valine 362 show a composition bias toward polar residues. Cysteine 458, histidine 461, cysteine 484, and cysteine 508 together coordinate Zn(2+). A GRF-type zinc finger spans residues cysteine 458 to tryptophan 517.

Belongs to the DNA repair enzymes AP/ExoA family. Mg(2+) serves as cofactor. It depends on Mn(2+) as a cofactor.

The protein localises to the nucleus. The catalysed reaction is Exonucleolytic cleavage in the 3'- to 5'-direction to yield nucleoside 5'-phosphates.. Its function is as follows. DNA repair enzyme that cleaves apurinic/apyrimidinic (AP) sites and removes 3'-blocking groups present at single strand breaks of damaged DNA. Provides the majority of the AP-endonuclease (APE) activity. Repairs phleomycin D1-induced DNA damage. Plays a role in oxidative damage repair. This chain is DNA-(apurinic or apyrimidinic site) endonuclease 2 (apn2), found in Schizosaccharomyces pombe (strain 972 / ATCC 24843) (Fission yeast).